Reading from the N-terminus, the 196-residue chain is Imidazoleglycerol-phosphate dehydratase (196 aa).

It belongs to the imidazoleglycerol-phosphate dehydratase family.

The protein localises to the cytoplasm. It carries out the reaction D-erythro-1-(imidazol-4-yl)glycerol 3-phosphate = 3-(imidazol-4-yl)-2-oxopropyl phosphate + H2O. Its pathway is amino-acid biosynthesis; L-histidine biosynthesis; L-histidine from 5-phospho-alpha-D-ribose 1-diphosphate: step 6/9. This chain is Imidazoleglycerol-phosphate dehydratase, found in Nitratidesulfovibrio vulgaris (strain DSM 19637 / Miyazaki F) (Desulfovibrio vulgaris).